A 63-amino-acid chain; its full sequence is uncharacterized protein (63 aa).

The N-terminal stretch at 1–21 (MNRALILTFVLFFALFAISSA) is a signal peptide.

This is an uncharacterized protein from Dictyostelium discoideum (Social amoeba).